Reading from the N-terminus, the 292-residue chain is Protease HtpX (292 aa).

The next 2 membrane-spanning stretches (helical) occupy residues 5-25 (IFLF…VMSL) and 34-54 (SGLL…SLLL). Residue H140 coordinates Zn(2+). E141 is an active-site residue. Residue H144 coordinates Zn(2+). 2 consecutive transmembrane segments (helical) span residues 155–175 (LLQG…GGII) and 193–213 (IIVF…AMWF). E218 lines the Zn(2+) pocket.

Belongs to the peptidase M48B family. It depends on Zn(2+) as a cofactor.

Its subcellular location is the cell inner membrane. This is Protease HtpX from Xanthomonas euvesicatoria pv. vesicatoria (strain 85-10) (Xanthomonas campestris pv. vesicatoria).